The primary structure comprises 330 residues: 1,8-cineole synthase (330 aa).

A Mg(2+)-binding site is contributed by D81. Positions 81–85 (DDHFD) match the DDXXD motif motif. R174 is a substrate binding site. Mg(2+)-binding residues include N220 and S224. The NXXXSXXXE motif motif lies at 220–228 (NDVLSLEKE). K227 is a substrate binding site. Residue E228 coordinates Mg(2+). A substrate-binding site is contributed by 314–315 (RY).

The protein belongs to the terpene synthase family. As to quaternary structure, homodimer. The cofactor is Mg(2+).

It catalyses the reaction (2E)-geranyl diphosphate + H2O = 1,8-cineole + diphosphate. It carries out the reaction neryl diphosphate + H2O = 1,8-cineole + diphosphate. In terms of biological role, in vitro, catalyzes the formation of 1,8-cineole from geranyl diphosphate (GPP). Can also accept neryl diphosphate (NPP) as substrate to produce 1,8-cineole. In Streptomyces clavuligerus, this protein is 1,8-cineole synthase.